A 250-amino-acid polypeptide reads, in one-letter code: Tripartite motif-containing protein 74 (250 aa).

Residues 16-57 (CPICLEVFKESLMLQCGHSYCKGCLVSLSYHLDTKVRCPMCW) form an RING-type zinc finger. The B box-type zinc-finger motif lies at 84-125 (PEPKVCVHHRNPLSLFCEKDQELICGLCGLLGSHQHHPVTPV). Zn(2+)-binding residues include C89, H92, C111, and H117. Coiled-coil stretches lie at residues 125–169 (VSTV…NESD) and 204–235 (LVAS…FGNE).

Belongs to the TRIM/RBCC family.

This chain is Tripartite motif-containing protein 74 (TRIM74), found in Homo sapiens (Human).